Consider the following 27-residue polypeptide: Omega-conotoxin RVIA (27 aa).

3 disulfide bridges follow: Cys1/Cys16, Cys8/Cys19, and Cys15/Cys26. 4-hydroxyproline is present on residues Pro4 and Pro7.

The protein belongs to the conotoxin O1 superfamily. In terms of tissue distribution, expressed by the venom duct.

It localises to the secreted. Functionally, omega-conotoxins act at presynaptic membranes, they bind and block voltage-gated calcium channels (Cav). The polypeptide is Omega-conotoxin RVIA (Conus radiatus (Rayed cone)).